The sequence spans 211 residues: ATP phosphoribosyltransferase (211 aa).

It belongs to the ATP phosphoribosyltransferase family. Short subfamily. In terms of assembly, heteromultimer composed of HisG and HisZ subunits.

The protein resides in the cytoplasm. It carries out the reaction 1-(5-phospho-beta-D-ribosyl)-ATP + diphosphate = 5-phospho-alpha-D-ribose 1-diphosphate + ATP. It functions in the pathway amino-acid biosynthesis; L-histidine biosynthesis; L-histidine from 5-phospho-alpha-D-ribose 1-diphosphate: step 1/9. In terms of biological role, catalyzes the condensation of ATP and 5-phosphoribose 1-diphosphate to form N'-(5'-phosphoribosyl)-ATP (PR-ATP). Has a crucial role in the pathway because the rate of histidine biosynthesis seems to be controlled primarily by regulation of HisG enzymatic activity. The polypeptide is ATP phosphoribosyltransferase (Pseudomonas fluorescens (strain ATCC BAA-477 / NRRL B-23932 / Pf-5)).